The primary structure comprises 177 residues: Calcium-binding protein CML38 (177 aa).

Residues 1–11 are compositionally biased toward polar residues; sequence MKNNTQPQSSF. The interval 1–44 is disordered; that stretch reads MKNNTQPQSSFKKLCRKLSPKREDSAGEIQQHNSSNGEDKNREL. EF-hand domains follow at residues 39–74, 75–110, 111–146, and 147–177; these read DKNRELEAVFSYMDANRDGRISPEELQKSFMTLGEQ, LSDEEAVAAVRLSDTDGDGMLDFEEFSQLIKVDDEE, EKKMELKGAFRLYIAEGEDCITPRSLKMMLKKLGES, and RTTDDCRVMISAFDLNADGVLSFDEFALMMR. Asp-52, Asn-54, Asp-56, Arg-58, Glu-63, Asp-88, Asp-90, Asp-92, Met-94, and Glu-99 together coordinate Ca(2+). Positions 160, 162, 164, and 171 each coordinate Ca(2+).

Binds to ABCG36. Expressed in cotyledons and guard cells of young leaves. In mature root, expressed in the epidermis, trichoblasts, young lateral root and root tip. Expressed from stage 9 to 15 of flower development in anther wall.

Its function is as follows. Potential calcium sensor that binds calcium in vitro. The protein is Calcium-binding protein CML38 of Arabidopsis thaliana (Mouse-ear cress).